A 485-amino-acid chain; its full sequence is Cys-Gly metallodipeptidase DUG1 (485 aa).

His-109 is a Zn(2+) binding site. Asp-111 is a catalytic residue. Residue Asp-144 participates in Zn(2+) binding. Residue Glu-178 is the Proton acceptor of the active site. Glu-179, Asp-207, and His-457 together coordinate Zn(2+).

The protein belongs to the peptidase M20A family. In terms of assembly, homodimer. Component of the GSH degradosomal complex. Requires Zn(2+) as cofactor. It depends on Mn(2+) as a cofactor.

It is found in the cytoplasm. Catalytic component of the GSH degradosomal complex involved in the degradation of glutathione (GSH) and other peptides containing a gamma-glu-X bond. Also functions as a dipeptidase with high specificity for Cys-Gly and no activity toward tri- or tetrapeptides. This chain is Cys-Gly metallodipeptidase DUG1 (DUG1), found in Candida albicans (strain SC5314 / ATCC MYA-2876) (Yeast).